A 238-amino-acid polypeptide reads, in one-letter code: Cysteine-rich venom protein natrin-2 (238 aa).

The signal sequence occupies residues 1-19 (MIAFIVLLSLAAVLQQSSG). Residues 38 to 164 (VDKHNALRRS…SSKYLYVCQY (127 aa)) form the SCP domain. Intrachain disulfides connect C75/C153, C92/C165, C148/C162, C184/C191, C187/C196, C200/C233, C209/C227, and C218/C231. A ShKT domain is found at 200-233 (CKHHNVFSNCQSLAKQNACQTEWMKSKCAASCFC).

In terms of tissue distribution, expressed by the venom gland.

It localises to the secreted. Inhibits carbachol-induced muscle contraction and weakly blocks muscle contraction evoked by potassium. This chain is Cysteine-rich venom protein natrin-2, found in Naja atra (Chinese cobra).